Consider the following 376-residue polypeptide: MTVKLTIDCMGGDHGPSVTVPAAVNFVRSHADAHLMLVGIESAIRAQLKKLKAADNPALTVVSASEIVAMDDPVEVALRKKKDSSMRVALNRVKDDEAQACISAGNTGALMAVSRYVLKTLPGIERPAIAFALPNPTGYTTMLDLGANVDCEPQHLLQFAEMGHALVAAVEGKERPSIGLLNIGEEVIKGNDIIKRAGELLRTSTLNFRGNVEGNDIYKGTVDVIVCDGFVGNVALKTSEGLAQMLSDIIKEEFGRSWLTKVMAVLALPVLLRFKKRVDHRQYNGAALLGLRGLVIKSHGSADAYAFEWAIKRGYDAVKNGVLERLARAMEENAGSLEQAKRDAGGPGSASQMASPIAGPVSGQPAEPYSAQSSKA.

The interval 334–376 (AGSLEQAKRDAGGPGSASQMASPIAGPVSGQPAEPYSAQSSKA) is disordered.

The protein belongs to the PlsX family. In terms of assembly, homodimer. Probably interacts with PlsY.

The protein resides in the cytoplasm. It carries out the reaction a fatty acyl-[ACP] + phosphate = an acyl phosphate + holo-[ACP]. It functions in the pathway lipid metabolism; phospholipid metabolism. Functionally, catalyzes the reversible formation of acyl-phosphate (acyl-PO(4)) from acyl-[acyl-carrier-protein] (acyl-ACP). This enzyme utilizes acyl-ACP as fatty acyl donor, but not acyl-CoA. The sequence is that of Phosphate acyltransferase from Paraburkholderia phymatum (strain DSM 17167 / CIP 108236 / LMG 21445 / STM815) (Burkholderia phymatum).